A 181-amino-acid chain; its full sequence is UPF0232 protein MAP_0004 (181 aa).

Positions 1-11 (MSDDQSPSPSG) are enriched in polar residues. 2 disordered regions span residues 1–70 (MSDD…PQPL) and 161–181 (APSW…DTYG). A compositionally biased stretch (basic and acidic residues) spans 18–39 (LVRRTLEEARAAARAQGKDAGR). Residues 40 to 50 (GRAAAPTPRRV) show a composition bias toward low complexity.

This sequence belongs to the UPF0232 family.

The protein is UPF0232 protein MAP_0004 of Mycolicibacterium paratuberculosis (strain ATCC BAA-968 / K-10) (Mycobacterium paratuberculosis).